Here is a 207-residue protein sequence, read N- to C-terminus: MARYLGPKAKLSRREGTDLFLKSARRSIADKAKFDSKPGQHGRTSGARTSDYGLQLREKQKVKRMYGVLEKQFRRYFEAAERLKGNTGANLLGLLECRLDNVVYRMGFGSTRAEARQLVSHKAITVNGQSVNIASYLVKAGDVVAVRDKSKKQARIVEALQLAQQVGMPVWVEVNADKVEGTFKKVPDRDEFGADINESLIVELYSR.

Residues 31–52 are disordered; sequence KAKFDSKPGQHGRTSGARTSDY. One can recognise an S4 RNA-binding domain in the interval 97–157; it reads CRLDNVVYRM…DKSKKQARIV (61 aa).

The protein belongs to the universal ribosomal protein uS4 family. Part of the 30S ribosomal subunit. Contacts protein S5. The interaction surface between S4 and S5 is involved in control of translational fidelity.

One of the primary rRNA binding proteins, it binds directly to 16S rRNA where it nucleates assembly of the body of the 30S subunit. Functionally, with S5 and S12 plays an important role in translational accuracy. This is Small ribosomal subunit protein uS4 from Acidovorax sp. (strain JS42).